Here is a 136-residue protein sequence, read N- to C-terminus: Nucleoside diphosphate kinase (136 aa).

Residues Lys10, Phe58, Arg86, Thr92, Arg104, and Asn114 each coordinate ATP. The Pros-phosphohistidine intermediate role is filled by His117.

The protein belongs to the NDK family. Homotetramer. It depends on Mg(2+) as a cofactor.

Its subcellular location is the cytoplasm. It catalyses the reaction a 2'-deoxyribonucleoside 5'-diphosphate + ATP = a 2'-deoxyribonucleoside 5'-triphosphate + ADP. The catalysed reaction is a ribonucleoside 5'-diphosphate + ATP = a ribonucleoside 5'-triphosphate + ADP. Its function is as follows. Major role in the synthesis of nucleoside triphosphates other than ATP. The ATP gamma phosphate is transferred to the NDP beta phosphate via a ping-pong mechanism, using a phosphorylated active-site intermediate. The sequence is that of Nucleoside diphosphate kinase from Mycobacterium sp. (strain MCS).